The following is a 322-amino-acid chain: Mas-related G-protein coupled receptor member B5 (322 aa).

The Extracellular portion of the chain corresponds to 1–34 (MGLTTPAWNINNTVVNGSNNTEHFSCVSKFNTLN). N-linked (GlcNAc...) asparagine glycosylation is found at Asn-11, Asn-16, and Asn-19. A helical membrane pass occupies residues 35–55 (FLTVIIAMFGLAGNAIVLWLL). Residues 56 to 70 (AFHLPRNAFSVYVCN) are Cytoplasmic-facing. The helical transmembrane segment at 71–91 (LACADFLQLCTQILGSLECFL) threads the bilayer. Over 92–98 (QLNRRHT) the chain is Extracellular. The chain crosses the membrane as a helical span at residues 99-119 (FFLTVVFMFAYLAGLCMIAAI). Residues 120–147 (SVERSLSVMWPIWYHCQRPRHTSSIMCA) lie on the Cytoplasmic side of the membrane. Residues 148 to 168 (LLWAFCLLLNFLLGEGCGLLF) traverse the membrane as a helical segment. The Extracellular portion of the chain corresponds to 169–172 (SDPK). Residues 173-193 (YYFCITCALITTALIILLTVV) form a helical membrane-spanning segment. Residues 194–216 (PSVSSLALLVKMICGSHRIPVTR) lie on the Cytoplasmic side of the membrane. A helical membrane pass occupies residues 217 to 237 (FYVTIALTLVVFIFLGLPFGI). The Extracellular portion of the chain corresponds to 238-260 (YSSFLIMFKEFQSIFSYHVLEVT). The helical transmembrane segment at 261-281 (IFLSCVNSCANPIIYFLVGSI) threads the bilayer. The Cytoplasmic portion of the chain corresponds to 282-322 (RQHRLQWQSLKLLLQRAMQDTPEEDSGERVPSQRSGELESV). The interval 302–322 (TPEEDSGERVPSQRSGELESV) is disordered.

Belongs to the G-protein coupled receptor 1 family. Mas subfamily.

The protein resides in the membrane. Functionally, orphan receptor. Probably involved in the function of nociceptive neurons. May regulate nociceptor function and/or development, including the sensation or modulation of pain. The chain is Mas-related G-protein coupled receptor member B5 (Mrgprb5) from Mus musculus (Mouse).